Here is a 500-residue protein sequence, read N- to C-terminus: Type-2 serine--tRNA ligase (500 aa).

Position 305 (alanine 305) interacts with L-serine. Residue cysteine 307 coordinates Zn(2+). An L-serine-binding site is contributed by arginine 337. ATP is bound by residues 337–339 (RYE) and 348–349 (RV). L-serine is bound by residues 354–356 (RIE) and glutamine 401. Glutamate 356 lines the Zn(2+) pocket. Glutamate 430 is a binding site for ATP. Asparagine 433 provides a ligand contact to L-serine. Cysteine 459 is a Zn(2+) binding site. Arginine 466 provides a ligand contact to ATP.

This sequence belongs to the class-II aminoacyl-tRNA synthetase family. Type-2 seryl-tRNA synthetase subfamily. In terms of assembly, homodimer. The cofactor is Zn(2+).

It is found in the cytoplasm. It carries out the reaction tRNA(Ser) + L-serine + ATP = L-seryl-tRNA(Ser) + AMP + diphosphate + H(+). The enzyme catalyses tRNA(Sec) + L-serine + ATP = L-seryl-tRNA(Sec) + AMP + diphosphate + H(+). Its pathway is aminoacyl-tRNA biosynthesis; selenocysteinyl-tRNA(Sec) biosynthesis; L-seryl-tRNA(Sec) from L-serine and tRNA(Sec): step 1/1. Its function is as follows. Catalyzes the attachment of serine to tRNA(Ser). Is also able to aminoacylate tRNA(Sec) with serine, to form the misacylated tRNA L-seryl-tRNA(Sec), which will be further converted into selenocysteinyl-tRNA(Sec). The sequence is that of Type-2 serine--tRNA ligase from Methanothrix thermoacetophila (strain DSM 6194 / JCM 14653 / NBRC 101360 / PT) (Methanosaeta thermophila).